The sequence spans 380 residues: Tomoregulin-1 (380 aa).

Positions Met-1–Ala-39 are cleaved as a signal peptide. Residues Ser-40–Val-330 lie on the Extracellular side of the membrane. Kazal-like domains are found at residues Ala-98 to Ser-145 and Val-189 to Asp-237. 9 cysteine pairs are disulfide-bonded: Cys-99–Cys-129, Cys-103–Cys-122, Cys-111–Cys-143, Cys-190–Cys-221, Cys-194–Cys-214, Cys-203–Cys-235, Cys-275–Cys-288, Cys-283–Cys-299, and Cys-301–Cys-310. One can recognise an EGF-like domain in the interval Asn-271 to Glu-311. The chain crosses the membrane as a helical span at residues Leu-331–Ile-351. At Thr-352–Val-380 the chain is on the cytoplasmic side. The disordered stretch occupies residues Asn-359–Val-380. The span at Gln-366–Val-380 shows a compositional bias: polar residues.

It belongs to the tomoregulin family. In terms of assembly, may interact with ST14. In terms of tissue distribution, expressed predominantly in brain, and at lower levels in heart, placenta and skeletal muscle. Down-regulated in brain tumors as compared to control brain tissues.

It localises to the cell membrane. Neuron-specific restriction factor that prevents herpes simplex virus 1 (HHV-1) infection in the brain by blocking viral entry. Also able to restrict herpes simplex virus 2 (HHV-2) infection, although to a lesser extent. Acts by preventing the association between the viral glycoprotein D (gD) and its cell surface receptor NECTIN1, thereby inhibiting fusion of the virus and the cell membrane. Also able to prevent the association between the viral glycoprotein B (gB) and MYH9/NMMHC-IIA and MYH10/NMMHC-IIB receptors. May be a tumor suppressor in brain cancers. This Homo sapiens (Human) protein is Tomoregulin-1.